A 362-amino-acid polypeptide reads, in one-letter code: Probable dual-specificity RNA methyltransferase RlmN (362 aa).

E105 acts as the Proton acceptor in catalysis. Residues 111–344 form the Radical SAM core domain; it reads HEYGNSICVT…VTIRREQGHD (234 aa). C118 and C349 form a disulfide bridge. Residues C125, C129, and C132 each coordinate [4Fe-4S] cluster. S-adenosyl-L-methionine is bound by residues 175-176, S207, 230-232, and N306; these read GE and SLH. Residue C349 is the S-methylcysteine intermediate of the active site.

Belongs to the radical SAM superfamily. RlmN family. Requires [4Fe-4S] cluster as cofactor.

The protein resides in the cytoplasm. It carries out the reaction adenosine(2503) in 23S rRNA + 2 reduced [2Fe-2S]-[ferredoxin] + 2 S-adenosyl-L-methionine = 2-methyladenosine(2503) in 23S rRNA + 5'-deoxyadenosine + L-methionine + 2 oxidized [2Fe-2S]-[ferredoxin] + S-adenosyl-L-homocysteine. It catalyses the reaction adenosine(37) in tRNA + 2 reduced [2Fe-2S]-[ferredoxin] + 2 S-adenosyl-L-methionine = 2-methyladenosine(37) in tRNA + 5'-deoxyadenosine + L-methionine + 2 oxidized [2Fe-2S]-[ferredoxin] + S-adenosyl-L-homocysteine. Its function is as follows. Specifically methylates position 2 of adenine 2503 in 23S rRNA and position 2 of adenine 37 in tRNAs. The sequence is that of Probable dual-specificity RNA methyltransferase RlmN from Bacillus cereus (strain G9842).